Consider the following 67-residue polypeptide: Large ribosomal subunit protein bL35 (67 aa).

Positions 21 to 50 (KVMCGPGNKRHGLINRPQKMKRTNRGPQTM) are disordered. Basic residues predominate over residues 28–44 (NKRHGLINRPQKMKRTN).

The protein belongs to the bacterial ribosomal protein bL35 family.

In Gluconobacter oxydans (strain 621H) (Gluconobacter suboxydans), this protein is Large ribosomal subunit protein bL35.